We begin with the raw amino-acid sequence, 363 residues long: Apelin receptor B (363 aa).

Topologically, residues 1-38 (MESEGFSATTEQYEYYDYANETGLQPCDETDWDFSYSL) are extracellular. An N-linked (GlcNAc...) asparagine glycan is attached at N20. 2 disulfide bridges follow: C27–C287 and C109–C186. Residues 39–59 (LPVFYMIVFVLGLSGNGVVIF) traverse the membrane as a helical segment. The Cytoplasmic segment spans residues 60–77 (TVWKAKPKRRSADTYIGN). The helical transmembrane segment at 78 to 98 (LALADLAFVVTLPLWATYTAL) threads the bilayer. Topologically, residues 99-111 (GFHWPFGSALCKL) are extracellular. The chain crosses the membrane as a helical span at residues 112 to 132 (SSYLVLLNMFASVFCLTCLSF). Residues 133–152 (DRYLAIVHSLSSAKLRSRSS) lie on the Cytoplasmic side of the membrane. A helical transmembrane segment spans residues 153 to 173 (ILVSLAVIWLFSGLLALPSLI). Over 174–200 (LRDTRVEGNNTICDLDFSGVSSKENEN) the chain is Extracellular. N182 is a glycosylation site (N-linked (GlcNAc...) asparagine). The helical transmembrane segment at 201–221 (FWIGGLSILTTVPGFLLPLLL) threads the bilayer. The Cytoplasmic segment spans residues 222–249 (MTIFYCFIGGKVTMHFQNLKKEEQKKKR). The helical transmembrane segment at 250-270 (LLKIIITLVVVFAICWLPFHI) threads the bilayer. The Extracellular segment spans residues 271-297 (LKTIHFLDLMGFLELSCSAQNIIVSLH). A helical membrane pass occupies residues 298–318 (PYATCLAYVNSCLNPFLYAFF). The Cytoplasmic segment spans residues 319-363 (DLRFRSQCFFFFGFKKVLQGHLSNTSSSLSAQTQKSEIHSLATKV).

The protein belongs to the G-protein coupled receptor 1 family. Expressed in all blood vessels including the posterior cardinal vein, intersomitic veins and the vitelline vein network.

It is found in the cell membrane. G protein-coupled receptor for peptide hormones apelin (apln) and apelin receptor early endogenous ligand (apela), that plays a role in the regulation of normal cardiovascular function and fluid homeostasis. When acting as apelin receptor, activates both G(i) protein pathway that inhibits adenylate cyclase activity, and the beta-arrestin pathway that promotes internalization of the receptor. Also functions as mechanoreceptor that is activated by pathological stimuli in a G-protein-independent fashion to induce beta-arrestin signaling, hence eliciting cardiac hypertrophy. However, the presence of apelin ligand blunts cardiac hypertrophic induction from APLNR/APJ on response to pathological stimuli. Plays a key role in early development such as gastrulation, blood vessels formation and heart morphogenesis by acting as a receptor for apela hormone, promoting endoderm and mesendoderm cell migration and regulating the migration of cells fated to become myocardial progenitors, respectively. Promotes angioblast migration toward the embryonic midline, i.e. the position of the future vessel formation, during vasculogenesis. May promote sinus venosus (SV)-derived endothelial cells migration into the developing heart to promote coronary blood vessel development. Required for cardiovascular development, particularly for intersomitic vein angiogenesis by acting as a receptor for apln hormone. Also plays a role in various processes in adults such as regulation of blood vessel formation, blood pressure, heart contractility, and heart failure. Acts upstream of the i/o type of G-alpha proteins in the differentiation of endothelium, erythroid cells, myeloid cells and cardiomyocytes. This Xenopus laevis (African clawed frog) protein is Apelin receptor B (aplnr-b).